Reading from the N-terminus, the 391-residue chain is E3 ubiquitin-protein ligase RMND5A (391 aa).

A LisH domain is found at 114–146 (SQQILSEVMVEHFFRQGMLDVAEELCQEAGLSI). Positions 153–210 (PFVELNRILEALKVRVLRPALEWAVSNREMLMAQNSSLEFKLHRLYFISLLMGGTVNQ) constitute a CTLH domain. Residues 336–377 (CPILRQQTTDNNPPMKLVCGHIISRDALNKMFNGSKLKCPYC) form an RING-Gid-type zinc finger.

Identified in the CTLH complex that contains at least RANBP9, MKLN1, MAEA, RMND5A, GID8 and ARMC8.

The protein resides in the nucleus. It is found in the nucleoplasm. Its subcellular location is the cytoplasm. The enzyme catalyses S-ubiquitinyl-[E2 ubiquitin-conjugating enzyme]-L-cysteine + [acceptor protein]-L-lysine = [E2 ubiquitin-conjugating enzyme]-L-cysteine + N(6)-ubiquitinyl-[acceptor protein]-L-lysine.. E3 ubiquitin-protein ligase component of the CTLH complex. This chain is E3 ubiquitin-protein ligase RMND5A (rmnd5a), found in Xenopus tropicalis (Western clawed frog).